Reading from the N-terminus, the 403-residue chain is GDSL esterase/lipase At1g28590 (403 aa).

The N-terminal stretch at 1–27 (MASLDSLPAMKLVRFILSTLLVTSVNS) is a signal peptide. The active-site Nucleophile is the serine 43. Asparagine 139 and asparagine 323 each carry an N-linked (GlcNAc...) asparagine glycan. Catalysis depends on residues aspartate 346 and histidine 349.

It belongs to the 'GDSL' lipolytic enzyme family.

Its subcellular location is the secreted. This chain is GDSL esterase/lipase At1g28590, found in Arabidopsis thaliana (Mouse-ear cress).